The sequence spans 920 residues: Urea transporter 2 (920 aa).

The interval 25–57 is disordered; that stretch reads FTSPSWPSTSPDTHPALPLLEMPEEKDLRSSNE. Residues 26–39 are compositionally biased toward low complexity; that stretch reads TSPSWPSTSPDTHP. Over residues 47–57 the composition is skewed to basic and acidic residues; that stretch reads PEEKDLRSSNE. Transmembrane regions (helical) follow at residues 151–170, 176–196, 204–224, 233–253, 272–291, 302–322, 346–366, 370–390, and 392–412; these read WWTI…ALAL, AIAS…MAVF, WWLL…SSAL, LPVF…ATGH, ITWT…VGVG, GGVF…HAAI, WSYN…ALTW, LLAL…SNIM, and VVGV…FLLL. The tract at residues 446 to 467 is disordered; that stretch reads EKAPSGGGGEHPPTAGPKVEEG. S477 bears the Phosphoserine mark. Transmembrane regions (helical) follow at residues 600 to 620, 638 to 658, 666 to 686, and 695 to 715; these read GILI…SGCL, AIAA…MAVF, WWLL…SSAL, and LPVF…ATGH. A glycan (N-linked (GlcNAc...) asparagine) is linked at N733. A run of 4 helical transmembrane segments spans residues 764 to 784, 803 to 823, 832 to 852, and 854 to 874; these read GGIF…HAAI, IYFG…GGMF, LLAI…ANML, and VFGL…FLLL.

Belongs to the urea transporter family. In terms of assembly, interacts with SNAPIN which enhances its urea transport activity. Epressed in the inner medulla of the kidney (at protein level). In terms of tissue distribution, expressed in the kidney.

It is found in the apical cell membrane. The protein localises to the cell membrane. It carries out the reaction urea(in) = urea(out). Its activity is regulated as follows. Inhibited by phloretin. Functionally, mediates the transport of urea driven by a concentration gradient across the cell membrane of the renal inner medullary collecting duct which is critical to the urinary concentrating mechanism. Mediates the transport of urea driven by a concentration gradient across the cell membrane of the kidney inner medullary collecting duct which is critical to the urinary concentrating mechanism. This is Urea transporter 2 (SLC14A2) from Homo sapiens (Human).